The sequence spans 100 residues: Small ribosomal subunit protein uS14 (100 aa).

The protein belongs to the universal ribosomal protein uS14 family. In terms of assembly, part of the 30S ribosomal subunit. Contacts proteins S3 and S10.

Binds 16S rRNA, required for the assembly of 30S particles and may also be responsible for determining the conformation of the 16S rRNA at the A site. This is Small ribosomal subunit protein uS14 from Prochlorococcus marinus subsp. pastoris (strain CCMP1986 / NIES-2087 / MED4).